The sequence spans 203 residues: Ribosomal RNA small subunit methyltransferase G (203 aa).

S-adenosyl-L-methionine contacts are provided by residues Gly73, Leu78, Val124 to Glu125, and Arg138.

Belongs to the methyltransferase superfamily. RNA methyltransferase RsmG family.

The protein localises to the cytoplasm. The enzyme catalyses guanosine(527) in 16S rRNA + S-adenosyl-L-methionine = N(7)-methylguanosine(527) in 16S rRNA + S-adenosyl-L-homocysteine. Functionally, specifically methylates the N7 position of guanine in position 527 of 16S rRNA. This is Ribosomal RNA small subunit methyltransferase G from Glaesserella parasuis serovar 5 (strain SH0165) (Haemophilus parasuis).